The following is a 690-amino-acid chain: MQKNKMVDLRAIFWFVVISSCAVAAPTCIQRSDFFKANGPYDINLRAMLSSLPSRVKDNEGFYKTPFKPGPNIAHGLGMCSRGTTTQDCSDCITSVSHTLLHTCPNQAEAIDWSSGDSLCLVRYSNHLINGSLDEDIIWAEYIEYKYNTSFGQTNLTEFKSTWQALMDRVINKVDGSLYANSIQELGSFPFRSIYAIAQCNKDLTKLNCEKCLQHLRIDNRSCCRGIQVGYIARTSCFMRWDLQPFLGLFINGMLPTPPSELDNGHSNTTKKDGKNISTGSIVAIAVVSVVVSTVLLALGYAVSRRRKAYQSFASENGYFSVSRRPRRPYGTASPDDATDDLTASSGSLRFDFRAIKAATSNFHKSNKLGHGGFGAVYKGMFPNGTEVAAKRLSKPSDQGEPEFKNEVLLVARLQHKNLVGLLGFSVEGEEKILVYEFVPNKSLDHFLFDPIKRVQLDWPRRHNIIEGITRGILYLHQDSRLTIIHRDLKASNILLDAEMNPKIADFGLARNFRVNQTEANTGRVVGTFGYMPPEYVANGQFSTKSDVYSFGVLILEIIGGKKNSSFHQIDGSVSNLVTHVWRLRNNGSLLELVDPAIGENYDKDEVIRCIHIGLLCVQENPDDRPSMSTIFRMLTNVSITLPVPQPPGFFFRERSEPNPLAERLLPGPSTSMSFTCSVDDASITSVRPR.

The signal sequence occupies residues 1 to 24; sequence MQKNKMVDLRAIFWFVVISSCAVA. The region spanning 25-129 is the Gnk2-homologous 1 domain; sequence APTCIQRSDF…CLVRYSNHLI (105 aa). Topologically, residues 25 to 281 are extracellular; that stretch reads APTCIQRSDF…KDGKNISTGS (257 aa). Residues Asn130, Asn148, Asn155, Asn220, Asn268, and Asn276 are each glycosylated (N-linked (GlcNAc...) asparagine). The region spanning 140-246 is the Gnk2-homologous 2 domain; sequence AEYIEYKYNT…CFMRWDLQPF (107 aa). A helical transmembrane segment spans residues 282–302; sequence IVAIAVVSVVVSTVLLALGYA. Residues 303–690 lie on the Cytoplasmic side of the membrane; that stretch reads VSRRRKAYQS…DASITSVRPR (388 aa). Residues 363 to 640 form the Protein kinase domain; the sequence is FHKSNKLGHG…IFRMLTNVSI (278 aa). ATP contacts are provided by residues 369–377 and Lys391; that span reads LGHGGFGAV. Tyr436 carries the phosphotyrosine modification. Asp488 serves as the catalytic Proton acceptor. Residue Ser492 is modified to Phosphoserine. Position 528 is a phosphothreonine (Thr528). The residue at position 536 (Tyr536) is a Phosphotyrosine.

Belongs to the protein kinase superfamily. Ser/Thr protein kinase family. CRK subfamily.

Its subcellular location is the membrane. It catalyses the reaction L-seryl-[protein] + ATP = O-phospho-L-seryl-[protein] + ADP + H(+). It carries out the reaction L-threonyl-[protein] + ATP = O-phospho-L-threonyl-[protein] + ADP + H(+). The polypeptide is Cysteine-rich receptor-like protein kinase 21 (CRK21) (Arabidopsis thaliana (Mouse-ear cress)).